We begin with the raw amino-acid sequence, 477 residues long: Glycogen synthase (477 aa).

An ADP-alpha-D-glucose-binding site is contributed by lysine 15.

The protein belongs to the glycosyltransferase 1 family. Bacterial/plant glycogen synthase subfamily.

The enzyme catalyses [(1-&gt;4)-alpha-D-glucosyl](n) + ADP-alpha-D-glucose = [(1-&gt;4)-alpha-D-glucosyl](n+1) + ADP + H(+). It functions in the pathway glycan biosynthesis; glycogen biosynthesis. In terms of biological role, synthesizes alpha-1,4-glucan chains using ADP-glucose. The protein is Glycogen synthase of Klebsiella pneumoniae subsp. pneumoniae (strain ATCC 700721 / MGH 78578).